Here is a 327-residue protein sequence, read N- to C-terminus: DNA-directed RNA polymerase subunit alpha (327 aa).

An alpha N-terminal domain (alpha-NTD) region spans residues M1–S231. An alpha C-terminal domain (alpha-CTD) region spans residues M252 to K327.

The protein belongs to the RNA polymerase alpha chain family. In terms of assembly, homodimer. The RNAP catalytic core consists of 2 alpha, 1 beta, 1 beta' and 1 omega subunit. When a sigma factor is associated with the core the holoenzyme is formed, which can initiate transcription.

It carries out the reaction RNA(n) + a ribonucleoside 5'-triphosphate = RNA(n+1) + diphosphate. In terms of biological role, DNA-dependent RNA polymerase catalyzes the transcription of DNA into RNA using the four ribonucleoside triphosphates as substrates. The sequence is that of DNA-directed RNA polymerase subunit alpha from Pelodictyon phaeoclathratiforme (strain DSM 5477 / BU-1).